The chain runs to 399 residues: Endo-1,4-beta-xylanase C (399 aa).

The first 20 residues, 1 to 20 (MFKFSASLAALAALVPFVAA), serve as a signal peptide directing secretion. The CBM1 domain occupies 21–56 (QSPEWGQCGGIGWTGPTTCVAGTTCVESNPYYSQCL). The GH10 domain maps to 81–396 (SAKLHTLAKA…KPAFNGIAAG (316 aa)). The active-site Proton donor is Glu212. Glu318 acts as the Nucleophile in catalysis. A disulfide bridge links Cys346 with Cys352.

Belongs to the glycosyl hydrolase 10 (cellulase F) family.

The protein resides in the secreted. The enzyme catalyses Endohydrolysis of (1-&gt;4)-beta-D-xylosidic linkages in xylans.. It participates in glycan degradation; xylan degradation. Endo-1,4-beta-xylanase involved in the hydrolysis of xylan, a major structural heterogeneous polysaccharide found in plant biomass representing the second most abundant polysaccharide in the biosphere, after cellulose. The polypeptide is Endo-1,4-beta-xylanase C (xynC) (Phanerodontia chrysosporium (White-rot fungus)).